The chain runs to 288 residues: Elongation factor Ts (288 aa).

An involved in Mg(2+) ion dislocation from EF-Tu region spans residues 82–85 (TDFV).

This sequence belongs to the EF-Ts family.

It is found in the cytoplasm. In terms of biological role, associates with the EF-Tu.GDP complex and induces the exchange of GDP to GTP. It remains bound to the aminoacyl-tRNA.EF-Tu.GTP complex up to the GTP hydrolysis stage on the ribosome. The chain is Elongation factor Ts from Chlorobium phaeovibrioides (strain DSM 265 / 1930) (Prosthecochloris vibrioformis (strain DSM 265)).